The primary structure comprises 200 residues: 3-isopropylmalate dehydratase small subunit (200 aa).

It belongs to the LeuD family. LeuD type 1 subfamily. In terms of assembly, heterodimer of LeuC and LeuD.

The catalysed reaction is (2R,3S)-3-isopropylmalate = (2S)-2-isopropylmalate. Its pathway is amino-acid biosynthesis; L-leucine biosynthesis; L-leucine from 3-methyl-2-oxobutanoate: step 2/4. Catalyzes the isomerization between 2-isopropylmalate and 3-isopropylmalate, via the formation of 2-isopropylmaleate. The chain is 3-isopropylmalate dehydratase small subunit from Pseudarthrobacter chlorophenolicus (strain ATCC 700700 / DSM 12829 / CIP 107037 / JCM 12360 / KCTC 9906 / NCIMB 13794 / A6) (Arthrobacter chlorophenolicus).